Consider the following 629-residue polypeptide: Myotonin-protein kinase (629 aa).

Topologically, residues 1-590 (MSAEVRLRRL…PRPGLSEALS (590 aa)) are cytoplasmic. In terms of domain architecture, Protein kinase spans 71–339 (FEILKVIGRG…AGDFRTHPFF (269 aa)). ATP-binding positions include 77–85 (IGRGAFSEV) and K100. D195 acts as the Proton acceptor in catalysis. S216 and S228 each carry phosphoserine; by autocatalysis. T234 is modified (phosphothreonine; by autocatalysis). The 76-residue stretch at 340–415 (FGLDWDGLRD…SCMALRDSEV (76 aa)) folds into the AGC-kinase C-terminal domain. A coiled-coil region spans residues 457-536 (VPAAEAEAEV…LQAEGATAVT (80 aa)). Residues 591–611 (LLLFAVVLSRAAALGCIGLVA) form a helical; Anchor for type IV membrane protein membrane-spanning segment. Residues 612 to 629 (HAGQLTAVWRRPGAARAP) lie on the Lumenal side of the membrane.

It belongs to the protein kinase superfamily. AGC Ser/Thr protein kinase family. DMPK subfamily. Homodimer; homodimerization stimulates the kinase activity. Interacts with HSPB2; may enhance DMPK kinase activity. Interacts with PLN; phosphorylates PLN. May interact with RAC1; may regulate DMPK kinase activity. Interacts with LMNA; may regulate nuclear envelope stability. Mg(2+) is required as a cofactor. In terms of processing, phosphorylated. Autophosphorylates. Phosphorylation by RAF1 may result in activation of DMPK. Proteolytic processing of the C-terminus may remove the transmembrane domain and release the kinase from membranes stimulating its activity. Most isoforms are expressed in many tissues including heart, skeletal muscle, liver and brain, except for isoform 2 which is only found in the heart and skeletal muscle, and isoform 14 which is only found in the brain, with high levels in the striatum, cerebellar cortex and pons.

The protein localises to the endoplasmic reticulum membrane. It localises to the nucleus outer membrane. Its subcellular location is the mitochondrion outer membrane. It is found in the sarcoplasmic reticulum membrane. The protein resides in the cell membrane. The protein localises to the cytoplasm. It localises to the cytosol. Its subcellular location is the mitochondrion membrane. It catalyses the reaction L-seryl-[protein] + ATP = O-phospho-L-seryl-[protein] + ADP + H(+). The enzyme catalyses L-threonyl-[protein] + ATP = O-phospho-L-threonyl-[protein] + ADP + H(+). With respect to regulation, coiled-coil-mediated oligomerization enhances the catalytic activity. Proteolytic processing of the C-terminus may release the protein from membranes and constitute a mean to regulate the enzyme. May be regulated by HSPB2, RAC1, RAF1 and G-protein second messengers. In terms of biological role, non-receptor serine/threonine protein kinase which is necessary for the maintenance of skeletal muscle structure and function. May play a role in myocyte differentiation and survival by regulating the integrity of the nuclear envelope and the expression of muscle-specific genes. May also phosphorylate PPP1R12A and inhibit the myosin phosphatase activity to regulate myosin phosphorylation. Also critical to the modulation of cardiac contractility and to the maintenance of proper cardiac conduction activity probably through the regulation of cellular calcium homeostasis. Phosphorylates PLN, a regulator of calcium pumps and may regulate sarcoplasmic reticulum calcium uptake in myocytes. May also phosphorylate FXYD1/PLM which is able to induce chloride currents. May also play a role in synaptic plasticity. The protein is Myotonin-protein kinase (DMPK) of Homo sapiens (Human).